The primary structure comprises 153 residues: Ribonuclease H (153 aa).

The RNase H type-1 domain occupies 4 to 146 (NNEIVEIYTD…CDRLATEQIK (143 aa)). Residues D13, E51, D73, and D138 each coordinate Mg(2+).

Belongs to the RNase H family. In terms of assembly, monomer. Mg(2+) is required as a cofactor.

Its subcellular location is the cytoplasm. The enzyme catalyses Endonucleolytic cleavage to 5'-phosphomonoester.. Endonuclease that specifically degrades the RNA of RNA-DNA hybrids. This chain is Ribonuclease H, found in Caldanaerobacter subterraneus subsp. tengcongensis (strain DSM 15242 / JCM 11007 / NBRC 100824 / MB4) (Thermoanaerobacter tengcongensis).